The following is a 254-amino-acid chain: 5-oxoprolinase subunit A (254 aa).

It belongs to the LamB/PxpA family. Forms a complex composed of PxpA, PxpB and PxpC.

The enzyme catalyses 5-oxo-L-proline + ATP + 2 H2O = L-glutamate + ADP + phosphate + H(+). Its function is as follows. Catalyzes the cleavage of 5-oxoproline to form L-glutamate coupled to the hydrolysis of ATP to ADP and inorganic phosphate. This Acinetobacter baylyi (strain ATCC 33305 / BD413 / ADP1) protein is 5-oxoprolinase subunit A.